The chain runs to 349 residues: UDP-N-acetylenolpyruvoylglucosamine reductase (349 aa).

The region spanning 24 to 197 (FGIAATARFA…VSVTFRLPKQ (174 aa)) is the FAD-binding PCMH-type domain. Arg-173 is an active-site residue. Ser-249 (proton donor) is an active-site residue. Glu-345 is a catalytic residue.

The protein belongs to the MurB family. FAD is required as a cofactor.

It is found in the cytoplasm. It catalyses the reaction UDP-N-acetyl-alpha-D-muramate + NADP(+) = UDP-N-acetyl-3-O-(1-carboxyvinyl)-alpha-D-glucosamine + NADPH + H(+). Its pathway is cell wall biogenesis; peptidoglycan biosynthesis. Its function is as follows. Cell wall formation. This chain is UDP-N-acetylenolpyruvoylglucosamine reductase, found in Burkholderia lata (strain ATCC 17760 / DSM 23089 / LMG 22485 / NCIMB 9086 / R18194 / 383).